The sequence spans 103 residues: Large ribosomal subunit protein uL24 (103 aa).

Belongs to the universal ribosomal protein uL24 family. As to quaternary structure, part of the 50S ribosomal subunit.

Its function is as follows. One of two assembly initiator proteins, it binds directly to the 5'-end of the 23S rRNA, where it nucleates assembly of the 50S subunit. One of the proteins that surrounds the polypeptide exit tunnel on the outside of the subunit. The protein is Large ribosomal subunit protein uL24 of Lacticaseibacillus casei (strain BL23) (Lactobacillus casei).